The sequence spans 265 residues: Exosome complex component RRP42 (265 aa).

This sequence belongs to the RNase PH family. As to quaternary structure, component of the RNA exosome complex. Specifically part of the catalytically inactive RNA exosome core complex (Exo-9) which may associate with the catalytic subunits RRP6 and DIS3 in cytoplasmic- and nuclear-specific RNA exosome complex forms. Exo-9 is formed by a hexameric base ring of RNase PH domain-containing subunits and a cap ring consisting of CSL4, RRP4 and RRP40.

Its subcellular location is the cytoplasm. The protein resides in the nucleus. It is found in the nucleolus. Its function is as follows. Non-catalytic component of the RNA exosome complex which has 3'-&gt;5' exoribonuclease activity and participates in a multitude of cellular RNA processing and degradation events. In the nucleus, the RNA exosome complex is involved in proper maturation of stable RNA species such as rRNA, snRNA and snoRNA, in the elimination of RNA processing by-products and non-coding 'pervasive' transcripts, such as antisense RNA species and cryptic unstable transcripts (CUTs), and of mRNAs with processing defects, thereby limiting or excluding their export to the cytoplasm. In the cytoplasm, the RNA exosome complex is involved in general mRNA turnover and in RNA surveillance pathways, preventing translation of aberrant mRNAs. The catalytic inactive RNA exosome core complex of 9 subunits (Exo-9) is proposed to play a pivotal role in the binding and presentation of RNA for ribonucleolysis, and to serve as a scaffold for the association with catalytic subunits and accessory proteins or complexes. RRP42 is part of the hexameric ring of RNase PH domain-containing subunits proposed to form a central channel which threads RNA substrates for degradation. This Saccharomyces cerevisiae (strain ATCC 204508 / S288c) (Baker's yeast) protein is Exosome complex component RRP42 (RRP42).